The following is a 20-amino-acid chain: Collagenolytic protease 36 kDa A (20 aa).

The region spanning 1-20 (IVGGTEVTPGEIPYQLSLQD) is the Peptidase S1 domain. Residues 1–20 (IVGGTEVTPGEIPYQLSLQD) are disordered.

Belongs to the peptidase S1 family.

It catalyses the reaction Hydrolysis of proteins, with broad specificity for peptide bonds. Native collagen is cleaved about 75% of the length of the molecule from the N-terminus. Low activity on small molecule substrates of both trypsin and chymotrypsin.. Functionally, this enzyme is a serine protease capable of degrading the native triple helix of collagen. This is Collagenolytic protease 36 kDa A from Paralithodes camtschaticus (Red king crab).